The chain runs to 401 residues: Probable acid ceramidase (401 aa).

An N-terminal signal peptide occupies residues 1–22 (MKPVAISLSLLLLVTLLPGSEQ). Residues Asn-101, Asn-303, and Asn-371 are each glycosylated (N-linked (GlcNAc...) asparagine).

This sequence belongs to the acid ceramidase family.

The catalysed reaction is an N-acyl-sphingoid base + H2O = a sphingoid base + a fatty acid. It carries out the reaction an N-acylsphing-4-enine + H2O = sphing-4-enine + a fatty acid. The enzyme catalyses an N-acyl-15-methylhexadecasphing-4-enine + H2O = 15-methylhexadecasphing-4-enine + a fatty acid. Catalyzes the hydrolysis of ceramides into sphingoid base and free fatty acid. C.elegans contain specific sphingoid bases, which are unique or different in structure compared to the sphingoid bases found in other animals. Two examples of these distinctive compounds are: 15-methylhexadecasphinganine and 15-methylhexadecasphing-4-enine. The protein is Probable acid ceramidase of Caenorhabditis elegans.